The chain runs to 1170 residues: MRLSSIKLAGFKSFVDPTHFQVPGQLVGVVGPNGCGKSNIIDAVRWVLGESRASELRGESMQDVIFNGSTTRKPGSRASVELIFDNSDGRAAGQWGQYGEIAVKRVLTRDGTSSYYINNLPARRRDIQDIFLGTGLGPRAYAIIGQGMIARIIEAKPEELRVFLEEAAGVSKYKERRRETENRLHDTRENLTRVEDIVRELGANLEKLEAQAVVATKYKELVADGEEKQRLLWLLRKNEAAAEQDRQRRAIGDAQIELDAQTAKLREVEAQLETLRVAHYSASDAMQGAQGALYEANAEVSRLEAQIKFIVESRNRVQAQIAALVAQQEQWRAQADKAQGDLEVAEEARAVADEKAAIAEDDAAAKHDALPALEARWRDAQTGLNDERGRIAQTEQALKLEAAHQRNADQQLQQLQQRHERLKVEAGGLDAPDEAQLEELRMQLAEHEAMLAEAQARLADAQEALPRLDAQRRAAHERVQAESAQIHQLEARLAALKQLQENVQTQGKIQPWLDKHELGALPRLWKKLHVEAGWETALEAVLRERLAALEVSNLDWVKAFATDAPPAKLAFYAPPAAGEPLAAPGALRPLLPLVRIDDAGLRAVLNDWLGTVFVADDLAQALAARMQLPQGGAFVVKAGHVVTRSGVQLYAADSEQAGMLARAQEIENLTRQVRAQALLSDEAKAAAIRAEAAHTQASQALTEVRAQAERATQRVHALQMDVLKLTQAHERYTQRSTQIREELEEIGAQIEEQRALRAESEANFERHDAELAELQARFEDNQLAFESLDETLTNARQEARERERAATDARFAARQSANRIDELKRSIQVAHEQAERVAASLEDARAELETINEQTAHTGLQDALEVRAAKEQALGAARAELDDLTAKLRAADEARLAAERSLQPLRDRITELQLKEQAARMTGEQFAEQLATAEVDEAALKEKLMPDMKPSYLQGEVTRINNAINALGPVNMAALDELAAASERKVFLDAQSADLTNAIETLEDAIRKIDQETRALLQATFDEVNRHFSDLFPRLFGGGQAKLIMTGDEILDAGVQVMAQPPGKKNATIHLLSGGEKALTATALVFAMFQLNPAPFCLLDEVDAPLDDANTERFANLVRAMSDKTQFLFISHNKIAMEMAQQLIGVTMQEQGVSRIVAVDMETAAGFAQN.

Pro32–Asn39 contributes to the ATP binding site. 3 coiled-coil regions span residues Gly169 to Ala215, Asp245 to Ala365, and Glu401 to Lys508. One can recognise an SMC hinge domain in the interval Ala520–Ala623. 2 coiled-coil regions span residues Gln664–Leu944 and Glu983–Thr1020.

The protein belongs to the SMC family. Homodimer.

Its subcellular location is the cytoplasm. Required for chromosome condensation and partitioning. In Burkholderia pseudomallei (strain 1710b), this protein is Chromosome partition protein Smc.